The primary structure comprises 903 residues: Zinc finger CCCH domain-containing protein 27 (903 aa).

A disordered region spans residues 1-144 (MIKESSSPAL…GRNGAPWAQH (144 aa)). A compositionally biased stretch (basic and acidic residues) spans 11–24 (DADKIEVPSPKDEN). Residues 33–46 (TDNEDFEISDDDDD) show a composition bias toward acidic residues. The span at 86 to 96 (SHGEAQKDFFP) shows a compositional bias: basic and acidic residues. The C3H1-type zinc-finger motif lies at 225-253 (GMPRQRCRDFEERGFCLRGDMCPMEHGLN). The segment at 390-456 (ASKKLGHGKT…GRQSNRASHK (67 aa)) is disordered. Low complexity predominate over residues 397–410 (GKTANATSTSATGN). Over residues 432–441 (KDSNGQSNSR) the composition is skewed to polar residues. One can recognise an RRM domain in the interval 459–531 (RTLYVNGIPL…RFIKLWWANR (73 aa)). Disordered stretches follow at residues 545 to 609 (KSSH…DTKR), 642 to 720 (KQKG…QTSP), and 826 to 903 (TNHS…DVSQ). A compositionally biased stretch (polar residues) spans 556-576 (SVPQPSSSNRGKENLQSATPR). A compositionally biased stretch (low complexity) spans 577–587 (ASSGSSAEASG). Positions 608 to 649 (KRQESLELLEELRKKQEILAQKRDEFRRQLEKLAKQKGLANS) form a coiled coil. Residues 693 to 708 (SGELASSSHKSSATSA) are compositionally biased toward low complexity. Positions 826 to 886 (TNHSRFQKTS…SMPTATSAKT (61 aa)) are enriched in polar residues.

In Oryza sativa subsp. japonica (Rice), this protein is Zinc finger CCCH domain-containing protein 27.